Here is a 198-residue protein sequence, read N- to C-terminus: MFKQSVFIKSAANKSGWIEDNIPEVCFVGRSNVGKSSFINTLANNKKLAKVANTPGKTRLLNFFDINNSSFRLVDAPGYGYAKISNSMKVEFGIMMEDYLTTRENLKLVCMLVDLRHKPTNDDVQMYDFLKANDIPVLMIGTKLDKLKRNEIAKNEKLIKETLEFDQNDVFVKVSNLDKINIKESYDALIRLLEVENG.

The 175-residue stretch at 21–195 (NIPEVCFVGR…YDALIRLLEV (175 aa)) folds into the EngB-type G domain. Residues 29–36 (GRSNVGKS), 56–60 (GKTRL), 75–78 (DAPG), 142–145 (TKLD), and 174–176 (VSN) contribute to the GTP site. 2 residues coordinate Mg(2+): Ser36 and Thr58.

It belongs to the TRAFAC class TrmE-Era-EngA-EngB-Septin-like GTPase superfamily. EngB GTPase family. Mg(2+) serves as cofactor.

Its function is as follows. Necessary for normal cell division and for the maintenance of normal septation. The chain is Probable GTP-binding protein EngB from Mesoplasma florum (strain ATCC 33453 / NBRC 100688 / NCTC 11704 / L1) (Acholeplasma florum).